We begin with the raw amino-acid sequence, 407 residues long: 1-deoxy-D-xylulose 5-phosphate reductoisomerase (407 aa).

The NADPH site is built by Thr-25, Gly-26, Ser-27, Ile-28, Asn-53, and Asn-136. Lys-137 provides a ligand contact to 1-deoxy-D-xylulose 5-phosphate. Residue Glu-138 coordinates NADPH. Residue Asp-162 participates in Mn(2+) binding. Residues Ser-163, Glu-164, Ser-188, and His-211 each contribute to the 1-deoxy-D-xylulose 5-phosphate site. Glu-164 contacts Mn(2+). Gly-217 is a binding site for NADPH. Residues Ser-224, Asn-229, Lys-230, and Glu-233 each contribute to the 1-deoxy-D-xylulose 5-phosphate site. Glu-233 provides a ligand contact to Mn(2+).

It belongs to the DXR family. Mg(2+) serves as cofactor. Mn(2+) is required as a cofactor.

The catalysed reaction is 2-C-methyl-D-erythritol 4-phosphate + NADP(+) = 1-deoxy-D-xylulose 5-phosphate + NADPH + H(+). Its pathway is isoprenoid biosynthesis; isopentenyl diphosphate biosynthesis via DXP pathway; isopentenyl diphosphate from 1-deoxy-D-xylulose 5-phosphate: step 1/6. Functionally, catalyzes the NADPH-dependent rearrangement and reduction of 1-deoxy-D-xylulose-5-phosphate (DXP) to 2-C-methyl-D-erythritol 4-phosphate (MEP). This is 1-deoxy-D-xylulose 5-phosphate reductoisomerase from Bradyrhizobium sp. (strain ORS 278).